The following is a 234-amino-acid chain: Ribitol-5-phosphate cytidylyltransferase (234 aa).

Residues 7 to 10 (LAGG) and 79 to 85 (GSIVQKS) each bind CTP.

It belongs to the IspD/TarI cytidylyltransferase family. TarI subfamily.

It catalyses the reaction D-ribitol 5-phosphate + CTP + H(+) = CDP-L-ribitol + diphosphate. It participates in cell wall biogenesis; poly(ribitol phosphate) teichoic acid biosynthesis. Functionally, catalyzes the transfer of the cytidylyl group of CTP to D-ribitol 5-phosphate. The chain is Ribitol-5-phosphate cytidylyltransferase from Lacticaseibacillus paracasei (strain ATCC 334 / BCRC 17002 / CCUG 31169 / CIP 107868 / KCTC 3260 / NRRL B-441) (Lactobacillus paracasei).